Here is a 760-residue protein sequence, read N- to C-terminus: Catecholate siderophore receptor Fiu (760 aa).

Positions 1–31 (MENNRNFPARQFHSLTFFAGLCIGITPVAQA) are cleaved as a signal peptide. Positions 67–175 (PVADTTRTMT…PTGSINMISK (109 aa)) constitute a TBDR plug domain. In terms of domain architecture, TBDR beta-barrel spans 180 to 760 (DSGIDASASI…TFLLTANMHF (581 aa)). A TonB C-terminal box motif is present at residues 743 to 760 (RYHPGEPRTFLLTANMHF).

Belongs to the TonB-dependent receptor family.

It localises to the cell outer membrane. Its function is as follows. Involved in the active transport across the outer membrane of iron complexed with catecholate siderophores such as dihydroxybenzoylserine and dihydroxybenzoate. It derives its energy for transport by interacting with the trans-periplasmic membrane protein TonB. Can also transport catechol-substituted cephalosporins. Receptor for microcins M, H47 and E492. This chain is Catecholate siderophore receptor Fiu (fiu), found in Escherichia coli (strain K12).